Consider the following 1404-residue polypeptide: DNA-directed RNA polymerase subunit beta' (1404 aa).

The Zn(2+) site is built by Cys-70, Cys-72, Cys-85, and Cys-88. Mg(2+)-binding residues include Asp-460, Asp-462, and Asp-464. The Zn(2+) site is built by Cys-814, Cys-888, Cys-895, and Cys-898.

This sequence belongs to the RNA polymerase beta' chain family. In terms of assembly, the RNAP catalytic core consists of 2 alpha, 1 beta, 1 beta' and 1 omega subunit. When a sigma factor is associated with the core the holoenzyme is formed, which can initiate transcription. The cofactor is Mg(2+). Requires Zn(2+) as cofactor.

The enzyme catalyses RNA(n) + a ribonucleoside 5'-triphosphate = RNA(n+1) + diphosphate. Its function is as follows. DNA-dependent RNA polymerase catalyzes the transcription of DNA into RNA using the four ribonucleoside triphosphates as substrates. The polypeptide is DNA-directed RNA polymerase subunit beta' (Shewanella piezotolerans (strain WP3 / JCM 13877)).